We begin with the raw amino-acid sequence, 694 residues long: Elongation factor G (694 aa).

Positions 8 to 287 (EDYRNFGIMA…AVVEFLPAPT (280 aa)) constitute a tr-type G domain. Residues 17–24 (AHIDAGKT), 86–90 (DTPGH), and 140–143 (NKMD) contribute to the GTP site.

The protein belongs to the TRAFAC class translation factor GTPase superfamily. Classic translation factor GTPase family. EF-G/EF-2 subfamily.

It is found in the cytoplasm. Its function is as follows. Catalyzes the GTP-dependent ribosomal translocation step during translation elongation. During this step, the ribosome changes from the pre-translocational (PRE) to the post-translocational (POST) state as the newly formed A-site-bound peptidyl-tRNA and P-site-bound deacylated tRNA move to the P and E sites, respectively. Catalyzes the coordinated movement of the two tRNA molecules, the mRNA and conformational changes in the ribosome. This chain is Elongation factor G, found in Brucella melitensis biotype 1 (strain ATCC 23456 / CCUG 17765 / NCTC 10094 / 16M).